The primary structure comprises 738 residues: Pentatricopeptide repeat-containing protein At5g65570 (738 aa).

PPR repeat units lie at residues 98–128 (AEIS…MSER), 129–163 (HIVT…NVLP), 164–198 (DEYT…GLEV), 200–230 (NVFV…VEEK), 231–265 (DVVL…KVQP), 266–300 (NEYT…GFES), 301–331 (ALAS…IEYP), 332–366 (NQVS…SIKP), 367–401 (NSFT…GFDR), 402–432 (DKYA…LSEV), 433–467 (DVIS…GLQP), 468–502 (NDVT…KIML), and 503–537 (TNDH…DLVL). The interval 537–612 (LWRTLLSACK…NPAMSWVEIN (76 aa)) is type E motif. Residues 613–644 (KETHTFMAGDLFSHPNSEQILENLEELIKKSK) are type E(+) motif. The tract at residues 645–738 (DLGYVEDKSC…DGSCSCGDYW (94 aa)) is type DYW motif.

The protein belongs to the PPR family. PCMP-H subfamily.

The polypeptide is Pentatricopeptide repeat-containing protein At5g65570 (PCMP-H47) (Arabidopsis thaliana (Mouse-ear cress)).